Here is a 356-residue protein sequence, read N- to C-terminus: Ribosomal RNA large subunit methyltransferase M (356 aa).

S-adenosyl-L-methionine-binding positions include S187, 220–223, D239, D259, and D276; that span reads CPGG. The Proton acceptor role is filled by K305.

The protein belongs to the class I-like SAM-binding methyltransferase superfamily. RNA methyltransferase RlmE family. RlmM subfamily. Monomer.

The protein localises to the cytoplasm. The enzyme catalyses cytidine(2498) in 23S rRNA + S-adenosyl-L-methionine = 2'-O-methylcytidine(2498) in 23S rRNA + S-adenosyl-L-homocysteine + H(+). Functionally, catalyzes the 2'-O-methylation at nucleotide C2498 in 23S rRNA. The chain is Ribosomal RNA large subunit methyltransferase M from Pseudoalteromonas atlantica (strain T6c / ATCC BAA-1087).